Reading from the N-terminus, the 840-residue chain is Phosphatidylglycerol lysyltransferase (840 aa).

The Cytoplasmic segment spans residues 1-8 (MTQELKSK). A helical transmembrane segment spans residues 9–29 (LLSFFKFIFATALFIFVIFTL). Topologically, residues 30–52 (YRELSHINFKETFIQFGKINRLW) are extracellular. Residues 53–73 (LVLLFAGGGLSLILLSLYDII) form a helical membrane-spanning segment. Over 74–89 (LVKALKLKMPLIRVFR) the chain is Cytoplasmic. A helical transmembrane segment spans residues 90–110 (VSYIINALNSIIGFGGFIGAG). Residues 111–129 (VRAFVYKNYTNDTKKLVQY) are Extracellular-facing. A helical membrane pass occupies residues 130-150 (ISIILVSMLTGLSLLSILVVL). Over 151–161 (RIFNASHMIDE) the chain is Cytoplasmic. A helical transmembrane segment spans residues 162–182 (ISWVRWILYIVALFLPIFIFY). The Extracellular portion of the chain corresponds to 183–200 (TVARPVDRNNRYMGVYCT). The helical transmembrane segment at 201 to 221 (VVSCVEWMAAATVLYFAALIV) threads the bilayer. Residues 222–229 (DIHISFMT) are Cytoplasmic-facing. The chain crosses the membrane as a helical span at residues 230-250 (FVGIFVIAALSGLVSFIPGGF). The Extracellular segment spans residues 251 to 270 (GAFDLVVLLGLKSLGISEEK). A helical transmembrane segment spans residues 271-291 (ILLALVLYRFAYYFVPVMIAL). Topologically, residues 292-337 (ILSSFEFGNTAKKYLDNSKYFIPVKDFTSFLRSYQKDILAKVPSFS) are cytoplasmic. The helical transmembrane segment at 338 to 358 (LAILIFLTSIIFFINNLTIVY) threads the bilayer. Residues 359 to 366 (DGLYDGNH) are Extracellular-facing. The helical transmembrane segment at 367 to 387 (FAYYIALAIQTSACLLLILNV) threads the bilayer. The Cytoplasmic portion of the chain corresponds to 388–392 (RGIYK). Residues 393-413 (GSRRAIIYAFISIILIASATI) form a helical membrane-spanning segment. Residues 414-415 (YT) lie on the Extracellular side of the membrane. The chain crosses the membrane as a helical span at residues 416 to 436 (YASFLLLSWLIIIFVLLILAY). Over 437–450 (QRAQVLKRPLRFKK) the chain is Cytoplasmic. Residues 451-471 (LAFMLLLSIFILYLNHILISG) form a helical membrane-spanning segment. The Extracellular portion of the chain corresponds to 472–489 (TLYALDVYHIEIDTSLLR). A helical transmembrane segment spans residues 490–510 (YYFWMTIVIIMLLVGVIAWLF). Residues 511 to 840 (DYKYKRPHHS…LKVMRVIRHK (330 aa)) are Cytoplasmic-facing.

Belongs to the LPG synthase family.

Its subcellular location is the cell membrane. The catalysed reaction is L-lysyl-tRNA(Lys) + a 1,2-diacyl-sn-glycero-3-phospho-(1'-sn-glycerol) = a 1,2-diacyl-sn-glycero-3-phospho-1'-(3'-O-L-lysyl)-sn-glycerol + tRNA(Lys). Its function is as follows. Catalyzes the transfer of a lysyl group from L-lysyl-tRNA(Lys) to membrane-bound phosphatidylglycerol (PG), which produces lysylphosphatidylglycerol (LPG), a major component of the bacterial membrane with a positive net charge. LPG synthesis contributes to bacterial virulence as it is involved in the resistance mechanism against cationic antimicrobial peptides (CAMP) produces by the host's immune system (defensins, cathelicidins) and by the competing microorganisms (bacteriocins). In fact, the modification of anionic phosphatidylglycerol with positively charged L-lysine results in repulsion of the peptides. This chain is Phosphatidylglycerol lysyltransferase (mprF), found in Staphylococcus epidermidis (strain ATCC 35984 / DSM 28319 / BCRC 17069 / CCUG 31568 / BM 3577 / RP62A).